Consider the following 284-residue polypeptide: D-tagatose-1,6-bisphosphate aldolase subunit GatY (284 aa).

Aspartate 82 (proton donor) is an active-site residue. Histidine 83 and histidine 180 together coordinate Zn(2+). Glycine 181 is a binding site for dihydroxyacetone phosphate. Histidine 208 contributes to the Zn(2+) binding site. Dihydroxyacetone phosphate is bound by residues 209–211 and 230–233; these read GAS and NVAT.

Belongs to the class II fructose-bisphosphate aldolase family. TagBP aldolase GatY subfamily. As to quaternary structure, forms a complex with GatZ. The cofactor is Zn(2+).

The catalysed reaction is D-tagatofuranose 1,6-bisphosphate = D-glyceraldehyde 3-phosphate + dihydroxyacetone phosphate. The protein operates within carbohydrate metabolism; D-tagatose 6-phosphate degradation; D-glyceraldehyde 3-phosphate and glycerone phosphate from D-tagatose 6-phosphate: step 2/2. In terms of biological role, catalytic subunit of the tagatose-1,6-bisphosphate aldolase GatYZ, which catalyzes the reversible aldol condensation of dihydroxyacetone phosphate (DHAP or glycerone-phosphate) with glyceraldehyde 3-phosphate (G3P) to produce tagatose 1,6-bisphosphate (TBP). Requires GatZ subunit for full activity and stability. Is involved in the catabolism of galactitol. The sequence is that of D-tagatose-1,6-bisphosphate aldolase subunit GatY from Shigella boydii serotype 4 (strain Sb227).